Here is a 1136-residue protein sequence, read N- to C-terminus: Myosin-binding protein C, fast-type (1136 aa).

2 disordered regions span residues Met-1 to Asp-55 and Ala-151 to Glu-177. Basic and acidic residues predominate over residues Lys-13–Pro-35. Residues Pro-46–Val-149 enclose the Ig-like C2-type 1 domain. Residues Ser-163–Asp-174 show a composition bias toward basic and acidic residues. Ig-like C2-type domains are found at residues Ser-250–Pro-339, Pro-340–Lys-432, Gln-433–Pro-533, and Pro-534–Val-633. 2 Fibronectin type-III domains span residues Pro-636–Thr-732 and Ala-734–Ile-829. One can recognise an Ig-like C2-type 6 domain in the interval Pro-833–Lys-927. A Fibronectin type-III 3 domain is found at Pro-930–Thr-1025. The Ig-like C2-type 7 domain maps to Pro-1043–Gln-1136.

This sequence belongs to the immunoglobulin superfamily. MyBP family.

Its function is as follows. Thick filament-associated protein located in the crossbridge region of vertebrate striated muscle a bands. In vitro it binds MHC, F-actin and native thin filaments, and modifies the activity of actin-activated myosin ATPase. It may modulate muscle contraction or may play a more structural role. This is Myosin-binding protein C, fast-type (Mybpc2) from Mus musculus (Mouse).